The sequence spans 338 residues: Formamidase (338 aa).

The CN hydrolase domain maps to 14 to 257 (VGIGLVQLQL…NEIITAEVRP (244 aa)). Catalysis depends on Glu60, which acts as the Proton acceptor. Lys129 (proton donor) is an active-site residue. Cys162 (nucleophile) is an active-site residue.

This sequence belongs to the carbon-nitrogen hydrolase superfamily. Aliphatic amidase family.

It carries out the reaction formamide + H2O = formate + NH4(+). Functionally, is an aliphatic amidase with a restricted substrate specificity, as it only hydrolyzes formamide. The polypeptide is Formamidase (Allorhizobium ampelinum (strain ATCC BAA-846 / DSM 112012 / S4) (Agrobacterium vitis (strain S4))).